The chain runs to 35 residues: Photosystem II reaction center protein T (35 aa).

A helical membrane pass occupies residues 3 to 23; the sequence is ALVYTFLLXSTLGIIFFAIFF.

It belongs to the PsbT family. PSII is composed of 1 copy each of membrane proteins PsbA, PsbB, PsbC, PsbD, PsbE, PsbF, PsbH, PsbI, PsbJ, PsbK, PsbL, PsbM, PsbT, PsbY, PsbZ, Psb30/Ycf12, at least 3 peripheral proteins of the oxygen-evolving complex and a large number of cofactors. It forms dimeric complexes.

The protein resides in the plastid. It localises to the chloroplast thylakoid membrane. Found at the monomer-monomer interface of the photosystem II (PS II) dimer, plays a role in assembly and dimerization of PSII. PSII is a light-driven water plastoquinone oxidoreductase, using light energy to abstract electrons from H(2)O, generating a proton gradient subsequently used for ATP formation. In Cunninghamia lanceolata (China fir), this protein is Photosystem II reaction center protein T.